Here is a 397-residue protein sequence, read N- to C-terminus: ATP-dependent RNA helicase eIF4A (397 aa).

A Q motif motif is present at residues 23–51; that stretch reads YKFDDLNLKPNIVRGIFGYGYETPSAIQQ. The Helicase ATP-binding domain occupies 54–224; the sequence is ILPITEGRDV…TKFMNNPVRI (171 aa). ATP is bound at residue 67 to 74; the sequence is AQSGTGKT. The DEAD box motif lies at 172 to 175; sequence DEAD. The 162-residue stretch at 235 to 396 folds into the Helicase C-terminal domain; it reads GIKQFYINVE…EMPADIGALF (162 aa).

It belongs to the DEAD box helicase family. eIF4A subfamily. As to quaternary structure, component of the eIF4F complex, which composition varies with external and internal environmental conditions. It is composed of at least eIF4A, eIF4E and eIF4G.

The protein localises to the cytoplasm. It carries out the reaction ATP + H2O = ADP + phosphate + H(+). Functionally, ATP-dependent RNA helicase which is a subunit of the eIF4F complex involved in cap recognition and is required for mRNA binding to ribosome. In the current model of translation initiation, eIF4A unwinds RNA secondary structures in the 5'-UTR of mRNAs which is necessary to allow efficient binding of the small ribosomal subunit, and subsequent scanning for the initiator codon. The sequence is that of ATP-dependent RNA helicase eIF4A (TIF1) from Candida albicans (strain SC5314 / ATCC MYA-2876) (Yeast).